The primary structure comprises 21 residues: Brevinin-2-related peptide (21 aa).

Position 21 is a leucine amide (leucine 21).

In terms of tissue distribution, expressed by the skin glands.

It localises to the secreted. Its function is as follows. Antimicrobial peptide with activity against Gram-negative and Gram-positive bacteria (MIC=13 uM against E.coli, MIC=25 uM against S.aureus) and fungi (MIC=25 uM against C.albicans). Also shows hemolytic activity (HC(50)=50 uM). In vitro, shows moderate inhibitory activity against HIV. This chain is Brevinin-2-related peptide, found in Lithobates septentrionalis (Mink frog).